A 456-amino-acid polypeptide reads, in one-letter code: tRNA-2-methylthio-N(6)-dimethylallyladenosine synthase (456 aa).

Positions 3 to 120 (KKVYVKTFGC…LPQMIDQRRA (118 aa)) constitute an MTTase N-terminal domain. [4Fe-4S] cluster is bound by residues Cys12, Cys49, Cys83, Cys157, Cys161, and Cys164. The Radical SAM core domain maps to 143–377 (RIDGPSAFVS…QATIEENVQR (235 aa)). Residues 380–447 (QAMVGKVERI…PHSLRGELVM (68 aa)) form the TRAM domain.

Belongs to the methylthiotransferase family. MiaB subfamily. Monomer. [4Fe-4S] cluster serves as cofactor.

It localises to the cytoplasm. It catalyses the reaction N(6)-dimethylallyladenosine(37) in tRNA + (sulfur carrier)-SH + AH2 + 2 S-adenosyl-L-methionine = 2-methylsulfanyl-N(6)-dimethylallyladenosine(37) in tRNA + (sulfur carrier)-H + 5'-deoxyadenosine + L-methionine + A + S-adenosyl-L-homocysteine + 2 H(+). Functionally, catalyzes the methylthiolation of N6-(dimethylallyl)adenosine (i(6)A), leading to the formation of 2-methylthio-N6-(dimethylallyl)adenosine (ms(2)i(6)A) at position 37 in tRNAs that read codons beginning with uridine. This Paraburkholderia phymatum (strain DSM 17167 / CIP 108236 / LMG 21445 / STM815) (Burkholderia phymatum) protein is tRNA-2-methylthio-N(6)-dimethylallyladenosine synthase.